Consider the following 107-residue polypeptide: U1-lycotoxin-Ls1o (107 aa).

The first 20 residues, 1 to 20 (MMKVLVVVALLVTLISYSSS), serve as a signal peptide directing secretion. Residues 21-41 (EGIDDLEADELLSLMANEQTR) constitute a propeptide that is removed on maturation. 4 cysteine pairs are disulfide-bonded: cysteine 44-cysteine 59, cysteine 51-cysteine 68, cysteine 58-cysteine 86, and cysteine 70-cysteine 84.

Belongs to the neurotoxin 19 (CSTX) family. 04 (U1-Lctx) subfamily. As to expression, expressed by the venom gland.

It localises to the secreted. In Lycosa singoriensis (Wolf spider), this protein is U1-lycotoxin-Ls1o.